Here is a 618-residue protein sequence, read N- to C-terminus: Dihydroxy-acid dehydratase (618 aa).

Residue D81 participates in Mg(2+) binding. Residue C122 coordinates [2Fe-2S] cluster. Mg(2+)-binding residues include D123 and K124. K124 bears the N6-carboxylysine mark. A [2Fe-2S] cluster-binding site is contributed by C195. E491 provides a ligand contact to Mg(2+). The active-site Proton acceptor is the S517.

It belongs to the IlvD/Edd family. Homodimer. [2Fe-2S] cluster serves as cofactor. Mg(2+) is required as a cofactor.

It carries out the reaction (2R)-2,3-dihydroxy-3-methylbutanoate = 3-methyl-2-oxobutanoate + H2O. The enzyme catalyses (2R,3R)-2,3-dihydroxy-3-methylpentanoate = (S)-3-methyl-2-oxopentanoate + H2O. The protein operates within amino-acid biosynthesis; L-isoleucine biosynthesis; L-isoleucine from 2-oxobutanoate: step 3/4. Its pathway is amino-acid biosynthesis; L-valine biosynthesis; L-valine from pyruvate: step 3/4. Its function is as follows. Functions in the biosynthesis of branched-chain amino acids. Catalyzes the dehydration of (2R,3R)-2,3-dihydroxy-3-methylpentanoate (2,3-dihydroxy-3-methylvalerate) into 2-oxo-3-methylpentanoate (2-oxo-3-methylvalerate) and of (2R)-2,3-dihydroxy-3-methylbutanoate (2,3-dihydroxyisovalerate) into 2-oxo-3-methylbutanoate (2-oxoisovalerate), the penultimate precursor to L-isoleucine and L-valine, respectively. This is Dihydroxy-acid dehydratase from Dechloromonas aromatica (strain RCB).